Here is a 406-residue protein sequence, read N- to C-terminus: Pyruvate dehydrogenase E1 component subunit beta-2, chloroplastic (406 aa).

The N-terminal 44 residues, 1–44 (MSSIIHGAGAATTTLSTFNSVDSKKLFVAPSRTNLSVRSQRYIV), are a transit peptide targeting the chloroplast. Residue E142 coordinates thiamine diphosphate. V195, A243, I244, and N248 together coordinate K(+).

In terms of assembly, tetramer of 2 alpha and 2 beta subunits. It depends on thiamine diphosphate as a cofactor.

Its subcellular location is the plastid. The protein resides in the chloroplast. It carries out the reaction N(6)-[(R)-lipoyl]-L-lysyl-[protein] + pyruvate + H(+) = N(6)-[(R)-S(8)-acetyldihydrolipoyl]-L-lysyl-[protein] + CO2. In terms of biological role, the pyruvate dehydrogenase complex catalyzes the overall conversion of pyruvate to acetyl-CoA and CO(2). It contains multiple copies of three enzymatic components: pyruvate dehydrogenase (E1), dihydrolipoamide acetyltransferase (E2) and lipoamide dehydrogenase (E3). In Arabidopsis thaliana (Mouse-ear cress), this protein is Pyruvate dehydrogenase E1 component subunit beta-2, chloroplastic (PDH-E1 BETA).